A 953-amino-acid polypeptide reads, in one-letter code: Ribonuclease E (953 aa).

Disordered stretches follow at residues 1 to 23 and 118 to 314; these read MIDG…PDRL and VAPQ…RRRP. Over residues 14 to 23 the composition is skewed to basic and acidic residues; the sequence is SQHEELPDRL. The segment covering 127–150 has biased composition (acidic residues); the sequence is LADDEDVDDGPDYVADDSDADDEG. Over residues 157–169 the composition is skewed to basic residues; sequence NRRRRRGRRGRGR. The segment covering 183–193 has biased composition (polar residues); that stretch reads DQQSEPRAQQF. A compositionally biased stretch (acidic residues) spans 199-223; that stretch reads AETDDGDDRDSEDTEAGDNGEDENG. Basic residues predominate over residues 230-240; it reads RRRRRRRRRKS. Composition is skewed to basic and acidic residues over residues 263 to 272 and 294 to 311; these read VHERVPRAGD and TRLE…DAGR. In terms of domain architecture, S1 motif spans 376-453; it reads GNIYLGIVQN…GHKGARLTTQ (78 aa). Asp-647 and Asp-691 together coordinate Mg(2+). Residues Cys-749 and Cys-752 each coordinate Zn(2+). Disordered regions lie at residues 766–808 and 822–953; these read SAAA…APGE and LAGR…IRLD. Positions 848–915 are enriched in acidic residues; that stretch reads DLDDTAQADF…DADVDEEDAA (68 aa).

It belongs to the RNase E/G family. In terms of assembly, assembles into a homotetramer formed by a dimer of dimers. Interacts with DNA-binding protein HU (hupB). Requires Mg(2+) as cofactor. It depends on Zn(2+) as a cofactor.

Its subcellular location is the cytoplasm. The catalysed reaction is Endonucleolytic cleavage of single-stranded RNA in A- and U-rich regions.. Endoribonuclease that plays a central role in RNA processing and decay. Plays a major role in pre-16S rRNA maturation, probably generating the mature 5'-end, and a minor role in pre-5S and pre-23S rRNA maturation. Probably also processes tRNA. RNase E and HupB jointly contribute to cellular adaptation to changing growth conditions and survival during antibiotic treatment and in the host. The polypeptide is Ribonuclease E (Mycobacterium tuberculosis (strain ATCC 25618 / H37Rv)).